Reading from the N-terminus, the 333-residue chain is Adenosine deaminase (333 aa).

Positions 12 and 14 each coordinate Zn(2+). Residues His-14, Asp-16, and Gly-170 each contribute to the substrate site. His-197 is a Zn(2+) binding site. The Proton donor role is filled by Glu-200. Asp-278 is a Zn(2+) binding site. Asp-279 serves as a coordination point for substrate.

Belongs to the metallo-dependent hydrolases superfamily. Adenosine and AMP deaminases family. Adenosine deaminase subfamily. It depends on Zn(2+) as a cofactor.

It carries out the reaction adenosine + H2O + H(+) = inosine + NH4(+). It catalyses the reaction 2'-deoxyadenosine + H2O + H(+) = 2'-deoxyinosine + NH4(+). Functionally, catalyzes the hydrolytic deamination of adenosine and 2-deoxyadenosine. The chain is Adenosine deaminase from Pseudoalteromonas translucida (strain TAC 125).